The chain runs to 241 residues: Pyridoxal phosphate phosphatase PHOSPHO2 (241 aa).

Asp8 (nucleophile) is an active-site residue. Positions 8 and 10 each coordinate Mg(2+). Catalysis depends on Asp10, which acts as the Proton donor. Positions 19 and 99 each coordinate substrate. A Mg(2+)-binding site is contributed by Asp179.

The protein belongs to the HAD-like hydrolase superfamily. PHOSPHO family. The cofactor is Mg(2+).

It catalyses the reaction pyridoxal 5'-phosphate + H2O = pyridoxal + phosphate. Phosphatase that has high activity toward pyridoxal 5'-phosphate (PLP). Also active at much lower level toward pyrophosphate, phosphoethanolamine (PEA), phosphocholine (PCho), phospho-l-tyrosine, fructose-6-phosphate, p-nitrophenyl phosphate, and h-glycerophosphate. This is Pyridoxal phosphate phosphatase PHOSPHO2 (Phospho2) from Mus musculus (Mouse).